A 212-amino-acid chain; its full sequence is Large ribosomal subunit protein uL3 (212 aa).

Residues 136-155 form a disordered region; the sequence is THGNSLSHRSNGSIGQNQTP. N5-methylglutamine is present on Q153.

The protein belongs to the universal ribosomal protein uL3 family. Part of the 50S ribosomal subunit. Forms a cluster with proteins L14 and L19. Methylated by PrmB.

Its function is as follows. One of the primary rRNA binding proteins, it binds directly near the 3'-end of the 23S rRNA, where it nucleates assembly of the 50S subunit. This is Large ribosomal subunit protein uL3 from Shewanella oneidensis (strain ATCC 700550 / JCM 31522 / CIP 106686 / LMG 19005 / NCIMB 14063 / MR-1).